Consider the following 57-residue polypeptide: Large ribosomal subunit protein bL32c (57 aa).

This sequence belongs to the bacterial ribosomal protein bL32 family.

It localises to the plastid. It is found in the chloroplast. The sequence is that of Large ribosomal subunit protein bL32c from Vitis vinifera (Grape).